Here is a 79-residue protein sequence, read N- to C-terminus: Defensin-like protein 54 (79 aa).

Residues 1–27 (MGIKKTSATVFLVIILTISFSYYDVEA) form the signal peptide. Disulfide bonds link cysteine 39–cysteine 76, cysteine 43–cysteine 67, cysteine 52–cysteine 74, and cysteine 56–cysteine 75.

The protein belongs to the DEFL family.

The protein localises to the secreted. The chain is Defensin-like protein 54 from Arabidopsis thaliana (Mouse-ear cress).